We begin with the raw amino-acid sequence, 115 residues long: Toxin CSTX-9 (115 aa).

Positions Met1–Ala20 are cleaved as a signal peptide. Positions Glu21–Arg47 are excised as a propeptide. 4 disulfide bridges follow: Cys53/Cys68, Cys60/Cys77, Cys67/Cys95, and Cys79/Cys93.

This sequence belongs to the neurotoxin 19 (CSTX) family. Monomer. Interacts with CSTX-13 (AC P83919) (Kd=370 nM), but does not interact with CSTX-1 (AC P81694). Expressed by the venom gland.

It localises to the secreted. The protein localises to the target cell membrane. Its function is as follows. Synergistic toxin that induces or increases a cytolytic effect when combined with CSTX-1 (AC P81694) or CSTX-13 (AC P83919). Potassium ions and M-ctenitoxin-Cs1a (AC P83619) have also an effect on its activity. When alone, has no insecticidal activity. This Cupiennius salei (American wandering spider) protein is Toxin CSTX-9.